The primary structure comprises 115 residues: Procyclic form-specific polypeptide (115 aa).

A signal peptide spans 1-27 (MAPRSLYLLAVLLFSANLFAGVGFAAA). The segment at 27 to 97 (AAEGPEDKGL…PEPEPGAATL (71 aa)) is disordered. Positions 31-52 (PEDKGLTKGGKGKGEKGTKVGA) are enriched in basic and acidic residues. A glycan (N-linked (GlcNAc...) asparagine) is linked at Asn56. 17 repeat units span residues 59–60 (DP), 61–62 (DP), 63–64 (EP), 65–66 (EP), 67–68 (EP), 69–70 (EP), 71–72 (EP), 73–74 (EP), 75–76 (EP), 77–78 (EP), 79–80 (EP), 81–82 (EP), 83–84 (EP), 85–86 (EP), 87–88 (EP), 89–90 (EP), and 91–92 (EP). Residues 59–92 (DPDPEPEPEPEPEPEPEPEPEPEPEPEPEPEPEP) form a 17 X 2 AA tandem repeats of [DE]-P region. Over residues 60–90 (PDPEPEPEPEPEPEPEPEPEPEPEPEPEPEP) the composition is skewed to acidic residues. Gly93 is lipidated: GPI-anchor amidated glycine. The propeptide at 94-115 (AATLKSVALPFAIAAAALVAAF) is removed in mature form.

The protein resides in the cell membrane. Major surface antigen of procyclic forms. This is Procyclic form-specific polypeptide (PROA) from Trypanosoma brucei brucei.